Consider the following 269-residue polypeptide: Eukaryotic translation initiation factor 3 subunit G-1 (269 aa).

The RRM domain occupies Ala188 to Pro266.

Belongs to the eIF-3 subunit G family. As to quaternary structure, component of the eukaryotic translation initiation factor 3 (eIF-3) complex. The eIF-3 complex interacts with pix.

It localises to the cytoplasm. Functionally, RNA-binding component of the eukaryotic translation initiation factor 3 (eIF-3) complex, which is involved in protein synthesis of a specialized repertoire of mRNAs and, together with other initiation factors, stimulates binding of mRNA and methionyl-tRNAi to the 40S ribosome. The eIF-3 complex specifically targets and initiates translation of a subset of mRNAs involved in cell proliferation. This subunit can bind 18S rRNA. The sequence is that of Eukaryotic translation initiation factor 3 subunit G-1 from Drosophila sechellia (Fruit fly).